We begin with the raw amino-acid sequence, 267 residues long: Energy-coupling factor transporter transmembrane protein EcfT (267 aa).

A run of 5 helical transmembrane segments spans residues Ile-26–Leu-46, Ile-73–Ile-93, Leu-116–Thr-136, Val-151–Leu-171, and Leu-247–Phe-267.

It belongs to the energy-coupling factor EcfT family. In terms of assembly, forms a stable energy-coupling factor (ECF) transporter complex composed of 2 membrane-embedded substrate-binding proteins (S component), 2 ATP-binding proteins (A component) and 2 transmembrane proteins (T component). May be able to interact with more than 1 S component at a time.

It localises to the cell membrane. Functionally, transmembrane (T) component of an energy-coupling factor (ECF) ABC-transporter complex. Unlike classic ABC transporters this ECF transporter provides the energy necessary to transport a number of different substrates. The sequence is that of Energy-coupling factor transporter transmembrane protein EcfT from Ruminiclostridium cellulolyticum (strain ATCC 35319 / DSM 5812 / JCM 6584 / H10) (Clostridium cellulolyticum).